We begin with the raw amino-acid sequence, 217 residues long: Proteasome subunit beta type-9 (217 aa).

A propeptide spans 1 to 18 (MLEESSEPGWLSEEVKTG) (removed in mature form). Catalysis depends on Thr19, which acts as the Nucleophile.

Belongs to the peptidase T1B family. As to quaternary structure, the 26S proteasome consists of a 20S proteasome core and two 19S regulatory subunits. The 20S proteasome core is composed of 28 subunits that are arranged in four stacked rings, resulting in a barrel-shaped structure. The two end rings are each formed by seven alpha subunits, and the two central rings are each formed by seven beta subunits. The catalytic chamber with the active sites is on the inside of the barrel. Component of the immunoproteasome, where it displaces the equivalent housekeeping subunit PSMB6. Autocleaved. The resulting N-terminal Thr residue of the mature subunit is responsible for the nucleophile proteolytic activity.

The protein resides in the cytoplasm. It is found in the nucleus. The catalysed reaction is Cleavage of peptide bonds with very broad specificity.. In terms of biological role, the proteasome is a multicatalytic proteinase complex which is characterized by its ability to cleave peptides with Arg, Phe, Tyr, Leu, and Glu adjacent to the leaving group at neutral or slightly basic pH. The proteasome has an ATP-dependent proteolytic activity. This subunit is involved in antigen processing to generate class I binding peptides. This Salmo salar (Atlantic salmon) protein is Proteasome subunit beta type-9 (psmb9-a).